The primary structure comprises 543 residues: Zinc finger CCHC domain-containing protein 7 (543 aa).

Positions 51–71 (EEEHEEKNSGNSESSSSKPNQ) are disordered. The span at 59 to 68 (SGNSESSSSK) shows a compositional bias: low complexity. Residues lysine 131, lysine 139, lysine 141, lysine 239, and lysine 254 each participate in a glycyl lysine isopeptide (Lys-Gly) (interchain with G-Cter in SUMO2) cross-link. 3 consecutive CCHC-type zinc fingers follow at residues 241-258 (IICRNCDKRGHLSKNCPL), 263-280 (RRCFLCSRRGHLLYSCPA), and 304-321 (KQCDRCHMLGHYTDACTE). Residue lysine 339 forms a Glycyl lysine isopeptide (Lys-Gly) (interchain with G-Cter in SUMO2) linkage. The CCHC-type 4 zinc-finger motif lies at 348–365 (AYCYHCAQKGHYGHECPE). Glycyl lysine isopeptide (Lys-Gly) (interchain with G-Cter in SUMO2) cross-links involve residues lysine 412, lysine 417, and lysine 435. The disordered stretch occupies residues 414–543 (PYIKAANENP…FLIKQRKKKS (130 aa)). Composition is skewed to basic and acidic residues over residues 441–457 (QENKETQKEMKNKNRNW) and 465–475 (RHREVDEDFPR). Residue lysine 478 forms a Glycyl lysine isopeptide (Lys-Gly) (interchain with G-Cter in SUMO2) linkage. A compositionally biased stretch (polar residues) spans 479 to 491 (TYSSPGSFKTQKP). 2 positions are modified to phosphoserine: serine 482 and serine 485. Residues lysine 487, lysine 490, and lysine 493 each participate in a glycyl lysine isopeptide (Lys-Gly) (interchain with G-Cter in SUMO2) cross-link. Residues 493 to 502 (KPFHRSSHYH) show a composition bias toward basic residues. Residues 503–515 (TSREDKSPKEGKR) show a composition bias toward basic and acidic residues. Residue lysine 537 forms a Glycyl lysine isopeptide (Lys-Gly) (interchain with G-Cter in SUMO2) linkage.

In terms of assembly, component of a nucleolar TRAMP-like complex, an ATP-dependent exosome regulatory complex consisting of a helicase (MTREX), an oligadenylate polymerase (TENT4B or TENT4A), and a substrate specific RNA-binding factor (ZCCHC7 or ZCCHC8). Several TRAMP-like complexes exist with specific compositions and are associated with nuclear, or nucleolar RNA exosomes.

It is found in the nucleus. The protein resides in the nucleolus. The protein is Zinc finger CCHC domain-containing protein 7 (ZCCHC7) of Homo sapiens (Human).